Here is a 102-residue protein sequence, read N- to C-terminus: Co-chaperonin GroES (102 aa).

This sequence belongs to the GroES chaperonin family. Heptamer of 7 subunits arranged in a ring. Interacts with the chaperonin GroEL.

The protein resides in the cytoplasm. Its function is as follows. Together with the chaperonin GroEL, plays an essential role in assisting protein folding. The GroEL-GroES system forms a nano-cage that allows encapsulation of the non-native substrate proteins and provides a physical environment optimized to promote and accelerate protein folding. GroES binds to the apical surface of the GroEL ring, thereby capping the opening of the GroEL channel. This Anabaena sp. (strain L31) protein is Co-chaperonin GroES.